The primary structure comprises 750 residues: Neprilysin (750 aa).

G2 is lipidated: N-myristoyl glycine. Topologically, residues 2–28 (GRSESQMDITDINAPKPKKKQRWTPLE) are cytoplasmic. A phosphoserine mark is found at S4 and S6. The Stop-transfer sequence motif lies at 16–23 (PKPKKKQR). The chain crosses the membrane as a helical; Signal-anchor for type II membrane protein span at residues 29 to 51 (ISLSVLVLLLTIIAVTMIALYAT). The Extracellular segment spans residues 52–750 (YDDGICKSSD…MNPERKCRVW (699 aa)). Residues 56–750 (ICKSSDCIKS…MNPERKCRVW (695 aa)) enclose the Peptidase M13 domain. 6 disulfides stabilise this stretch: C57/C62, C80/C735, C88/C695, C143/C411, C234/C242, and C621/C747. R103 contributes to the a peptide binding site. N-linked (GlcNAc...) asparagine glycosylation is found at N145 and N211. N285, N311, and N325 each carry an N-linked (GlcNAc...) asparagine glycan. Zn(2+) is bound at residue H584. The active site involves E585. H588 contributes to the Zn(2+) binding site. N628 is a glycosylation site (N-linked (GlcNAc...) asparagine). Residue E647 coordinates Zn(2+). Residue D651 is the Proton donor of the active site.

It belongs to the peptidase M13 family. Requires Zn(2+) as cofactor. Myristoylation is a determinant of membrane targeting. In terms of processing, glycosylation at Asn-628 is necessary both for surface expression and neutral endopeptidase activity.

It is found in the cell membrane. The enzyme catalyses Preferential cleavage of polypeptides between hydrophobic residues, particularly with Phe or Tyr at P1'.. It catalyses the reaction substance P + H2O = substance P(1-9) + L-Leu-L-Met-NH2. The catalysed reaction is substance P + H2O = substance P(1-7) + L-Phe-Gly-L-Leu-L-Met-NH2. It carries out the reaction neurotensin + H2O = neurotensin(1-11) + L-isoleucyl-L-leucine. The enzyme catalyses neurotensin + H2O = neurotensin(1-10) + L-tyrosyl-L-isoleucyl-L-leucine. Thermolysin-like specificity, but is almost confined on acting on polypeptides of up to 30 amino acids. Biologically important in the destruction of opioid peptides such as Met- and Leu-enkephalins by cleavage of a Gly-Phe bond. Catalyzes cleavage of bradykinin, substance P and neurotensin peptides. Able to cleave angiotensin-1, angiotensin-2 and angiotensin 1-9. Involved in the degradation of the atrial natriuretic factor (ANF). Displays UV-inducible elastase activity toward skin preelastic and elastic fibers. This chain is Neprilysin, found in Mus musculus (Mouse).